Here is a 502-residue protein sequence, read N- to C-terminus: Lysine--tRNA ligase (502 aa).

Glu413 and Glu420 together coordinate Mg(2+).

The protein belongs to the class-II aminoacyl-tRNA synthetase family. As to quaternary structure, homodimer. It depends on Mg(2+) as a cofactor.

Its subcellular location is the cytoplasm. It carries out the reaction tRNA(Lys) + L-lysine + ATP = L-lysyl-tRNA(Lys) + AMP + diphosphate. This Haemophilus influenzae (strain PittEE) protein is Lysine--tRNA ligase.